The sequence spans 656 residues: Nuclear pore complex protein Nup85 (656 aa).

Methionine 1 is modified (N-acetylmethionine). Position 92 is an N6-acetyllysine (lysine 92). Serine 223 is modified (phosphoserine).

Belongs to the nucleoporin Nup85 family. Component of the nuclear pore complex (NPC). Component of the NPC Nup107-160 subcomplex, consisting of at least NUP107, NUP98/Nup96, NUP160, NUP133, NUP85, NUP37, NUP43 and SEC13. Interacts with NUP160, NUP133 and SEC13. Interacts with NUP37, NUP107 and NUP43. Interacts with CCR2.

Its subcellular location is the nucleus. It localises to the nuclear pore complex. The protein localises to the chromosome. The protein resides in the centromere. It is found in the kinetochore. Its subcellular location is the cytoplasm. It localises to the cytoskeleton. The protein localises to the spindle. The protein resides in the nucleus membrane. In terms of biological role, essential component of the nuclear pore complex (NPC) that seems to be required for NPC assembly and maintenance. As part of the NPC Nup107-160 subcomplex plays a role in RNA export and in tethering NUP96/Nup98 and NUP153 to the nucleus. The Nup107-160 complex seems to be required for spindle assembly during mitosis. NUP85 is required for membrane clustering of CCL2-activated CCR2. Seems to be involved in CCR2-mediated chemotaxis of monocytes and may link activated CCR2 to the phosphatidyl-inositol 3-kinase-Rac-lammellipodium protrusion cascade. Involved in nephrogenesis. This is Nuclear pore complex protein Nup85 (NUP85) from Homo sapiens (Human).